A 365-amino-acid polypeptide reads, in one-letter code: Putative glycosyltransferase C06E1.7 (365 aa).

Belongs to the glycosyltransferase 11 family.

This chain is Putative glycosyltransferase C06E1.7, found in Caenorhabditis elegans.